Here is a 159-residue protein sequence, read N- to C-terminus: Neuroglobin (159 aa).

A Globin domain is found at 3 to 151 (KLSEKDKELI…VVAAMSQGWA (149 aa)). Heme b-binding residues include histidine 66 and histidine 98.

It belongs to the globin family. As to quaternary structure, monomer. Homodimers and homotetramers. Mainly monomeric but also detected as part of homodimers and homotetramers.

It localises to the cytoplasm. Its subcellular location is the cytosol. It is found in the mitochondrion matrix. It carries out the reaction Fe(III)-heme b-[protein] + nitric oxide + H2O = Fe(II)-heme b-[protein] + nitrite + 2 H(+). In terms of biological role, monomeric globin with a bis-histidyl six-coordinate heme-iron atom through which it can bind dioxygen, carbon monoxide and nitric oxide. Could help transport oxygen and increase its availability to the metabolically active neuronal tissues, though its low quantity in tissues as well as its high affinity for dioxygen, which may limit its oxygen-releasing ability, argue against it. The ferrous/deoxygenated form exhibits a nitrite reductase activity and it could produce nitric oxide which in turn inhibits cellular respiration in response to hypoxia. In its ferrous/deoxygenated state, it may also exhibit GDI (Guanine nucleotide Dissociation Inhibitor) activity toward heterotrimeric G-alpha proteins, thereby regulating signal transduction to facilitate neuroprotective responses in the wake of hypoxia and associated oxidative stress. This is Neuroglobin (ngb) from Chaenocephalus aceratus (Blackfin icefish).